The chain runs to 341 residues: Solute carrier family 25 member 43 (341 aa).

3 Solcar repeats span residues 11-101 (TGSQ…MDDL), 105-185 (SQWS…LLVY), and 200-298 (SHLQ…LYQN). The next 6 helical transmembrane spans lie at 16 to 36 (LLCA…LELA), 68 to 88 (LWKG…VQLA), 110 to 130 (IVTG…TDLI), 166 to 186 (GVSL…LVYM), 205 to 225 (FANV…FDTV), and 262 to 282 (VLGL…YFGV).

It belongs to the mitochondrial carrier (TC 2.A.29) family.

The protein resides in the mitochondrion inner membrane. The sequence is that of Solute carrier family 25 member 43 (Slc25a43) from Mus musculus (Mouse).